Consider the following 164-residue polypeptide: MPSLAPDCPLLAMPEETQEDSVAPMMPSQRSRGPLAPNHVHEVCLHQVESISDLHSGAGTLRPYLTEEARPWDELLGVLPPSLCAQAGCSPVYRRGGFLLLLALLVLTCLVLALLAVYLSVLQSESLRILAHTLRTQEETLLKLRLASLSQLRRLNSSEAQAPS.

A helical transmembrane segment spans residues 97–117 (GFLLLLALLVLTCLVLALLAV).

It localises to the membrane. The polypeptide is Leucine-rich single-pass membrane protein 2 (LSMEM2) (Homo sapiens (Human)).